The following is a 132-amino-acid chain: Phosphoribosyl-AMP cyclohydrolase (132 aa).

Residue Asp76 participates in Mg(2+) binding. Cys77 contacts Zn(2+). Residues Asp78 and Asp80 each coordinate Mg(2+). Zn(2+) is bound by residues Cys93 and Cys100.

This sequence belongs to the PRA-CH family. Homodimer. Mg(2+) serves as cofactor. The cofactor is Zn(2+).

Its subcellular location is the cytoplasm. It catalyses the reaction 1-(5-phospho-beta-D-ribosyl)-5'-AMP + H2O = 1-(5-phospho-beta-D-ribosyl)-5-[(5-phospho-beta-D-ribosylamino)methylideneamino]imidazole-4-carboxamide. The protein operates within amino-acid biosynthesis; L-histidine biosynthesis; L-histidine from 5-phospho-alpha-D-ribose 1-diphosphate: step 3/9. Functionally, catalyzes the hydrolysis of the adenine ring of phosphoribosyl-AMP. This is Phosphoribosyl-AMP cyclohydrolase from Methanobrevibacter smithii (strain ATCC 35061 / DSM 861 / OCM 144 / PS).